We begin with the raw amino-acid sequence, 381 residues long: Lysophosphatidylserine lipase ABHD12 (381 aa).

The Cytoplasmic portion of the chain corresponds to 1 to 58; it reads MRKRNESVTVEHERAAAAPAPLDKGCSLRHSLRLPAADTGMKRPLGRRHGLWFRLRRL. Residues 59 to 79 traverse the membrane as a helical segment; it reads IIWLLGVYIAIPFLVKLCPAI. Topologically, residues 80–381 are extracellular; that stretch reads QAKLVFLNFV…LGIPEHEHHH (302 aa). Asparagine 106 carries an N-linked (GlcNAc...) asparagine glycan. The active-site Nucleophile is the serine 229. Active-site charge relay system residues include aspartate 316 and histidine 355.

This sequence belongs to the serine esterase family.

The protein localises to the endoplasmic reticulum membrane. It catalyses the reaction 1-(9Z-octadecenoyl)-sn-glycero-3-phospho-L-serine + H2O = sn-glycero-3-phospho-L-serine + (9Z)-octadecenoate + H(+). The enzyme catalyses 1-(9Z-octadecenoyl)-sn-glycero-3-phospho-(1'-sn-glycerol) + H2O = sn-glycero-3-phospho-(1'-sn-glycerol) + (9Z)-octadecenoate + H(+). The catalysed reaction is 1-(9Z-octadecenoyl)-sn-glycero-3-phospho-(1D-myo-inositol) + H2O = sn-glycero-3-phospho-1D-myo-inositol + (9Z)-octadecenoate + H(+). It carries out the reaction 1-(9Z-octadecenoyl)-sn-glycero-3-phosphoethanolamine + H2O = sn-glycero-3-phosphoethanolamine + (9Z)-octadecenoate + H(+). It catalyses the reaction 1-(9Z-octadecenoyl)-sn-glycero-3-phosphocholine + H2O = 1-(9Z-octadecenoyl)-sn-glycerol + phosphocholine + H(+). The enzyme catalyses 2-(9Z-octadecenoyl)-glycerol + H2O = glycerol + (9Z)-octadecenoate + H(+). The catalysed reaction is 1-hexadecanoyl-sn-glycero-3-phospho-L-serine + H2O = sn-glycero-3-phospho-L-serine + hexadecanoate + H(+). It carries out the reaction 2-(5Z,8Z,11Z,14Z-eicosatetraenoyl)-glycerol + H2O = glycerol + (5Z,8Z,11Z,14Z)-eicosatetraenoate + H(+). It catalyses the reaction Hydrolyzes glycerol monoesters of long-chain fatty acids.. The enzyme catalyses 1-decanoylglycerol + H2O = decanoate + glycerol + H(+). The catalysed reaction is 1-dodecanoylglycerol + H2O = dodecanoate + glycerol + H(+). It carries out the reaction 1-tetradecanoylglycerol + H2O = tetradecanoate + glycerol + H(+). It catalyses the reaction 2-hexadecanoylglycerol + H2O = glycerol + hexadecanoate + H(+). The enzyme catalyses 1-(9Z-octadecenoyl)-glycerol + H2O = glycerol + (9Z)-octadecenoate + H(+). The catalysed reaction is 2-(9Z,12Z-octadecadienoyl)-glycerol + H2O = (9Z,12Z)-octadecadienoate + glycerol + H(+). It carries out the reaction 1-(5Z,8Z,11Z,14Z-eicosatetraenoyl)-glycerol + H2O = glycerol + (5Z,8Z,11Z,14Z)-eicosatetraenoate + H(+). It catalyses the reaction 1-(9Z,12Z-octadecadienoyl)-glycerol + H2O = (9Z,12Z)-octadecadienoate + glycerol + H(+). The enzyme catalyses 1-hexadecanoylglycerol + H2O = glycerol + hexadecanoate + H(+). The catalysed reaction is 1-octadecanoylglycerol + H2O = octadecanoate + glycerol + H(+). It carries out the reaction 1-octadecanoyl-2-(9,10-epoxyoctadecanoyl)-sn-glycero-3-phospho-L-serine + H2O = 9,10-epoxyoctadecanoate + 1-octadecanoyl-sn-glycero-3-phosphoserine + H(+). It catalyses the reaction 1-octadecanoyl-2-(10-hydroxyoctadecanoyl)-sn-glycero-3-phospho-L-serine + H2O = 1-octadecanoyl-sn-glycero-3-phosphoserine + 10-hydroxyoctadecanoate + H(+). The enzyme catalyses 1-hexadecanoyl-2-(10-hydroxyoctadecanoyl)-sn-glycero-3-phospho-L-serine + H2O = 10-hydroxyoctadecanoate + 1-hexadecanoyl-sn-glycero-3-phospho-L-serine + H(+). Its function is as follows. Lysophosphatidylserine (LPS) lipase that mediates the hydrolysis of lysophosphatidylserine, a class of signaling lipids that regulates immunological and neurological processes. Represents a major lysophosphatidylserine lipase in the brain, thereby playing a key role in the central nervous system. Also able to hydrolyze oxidized phosphatidylserine; oxidized phosphatidylserine is produced in response to severe inflammatory stress and constitutes a proapoptotic 'eat me' signal. Also has monoacylglycerol (MAG) lipase activity: hydrolyzes 2-arachidonoylglycerol (2-AG), thereby acting as a regulator of endocannabinoid signaling pathways. Has a strong preference for very-long-chain lipid substrates; substrate specificity is likely due to improved catalysis and not improved substrate binding. This is Lysophosphatidylserine lipase ABHD12 from Gallus gallus (Chicken).